The primary structure comprises 200 residues: Holliday junction branch migration complex subunit RuvA (200 aa).

The interval 1 to 63 (MYAYVKGKLT…EDAQLLYGFS (63 aa)) is domain I. The tract at residues 64 to 142 (SEEEKDMFLS…ITEEDSDSLL (79 aa)) is domain II. A flexible linker region spans residues 143 to 149 (QVDATST). A domain III region spans residues 150–200 (EQDQFVQEAMLALEALGYSKRELAKVEKTLNKNKYDSVDEAVKAGLQLVVS).

It belongs to the RuvA family. In terms of assembly, homotetramer. Forms an RuvA(8)-RuvB(12)-Holliday junction (HJ) complex. HJ DNA is sandwiched between 2 RuvA tetramers; dsDNA enters through RuvA and exits via RuvB. An RuvB hexamer assembles on each DNA strand where it exits the tetramer. Each RuvB hexamer is contacted by two RuvA subunits (via domain III) on 2 adjacent RuvB subunits; this complex drives branch migration. In the full resolvosome a probable DNA-RuvA(4)-RuvB(12)-RuvC(2) complex forms which resolves the HJ.

The protein resides in the cytoplasm. Functionally, the RuvA-RuvB-RuvC complex processes Holliday junction (HJ) DNA during genetic recombination and DNA repair, while the RuvA-RuvB complex plays an important role in the rescue of blocked DNA replication forks via replication fork reversal (RFR). RuvA specifically binds to HJ cruciform DNA, conferring on it an open structure. The RuvB hexamer acts as an ATP-dependent pump, pulling dsDNA into and through the RuvAB complex. HJ branch migration allows RuvC to scan DNA until it finds its consensus sequence, where it cleaves and resolves the cruciform DNA. The protein is Holliday junction branch migration complex subunit RuvA of Staphylococcus aureus (strain MRSA252).